Reading from the N-terminus, the 971-residue chain is MTSTSARPARRSRAPLAITAAIIAALVIAFFIFAGFYADVLWYDQLGYLGVLLTQWGAGIALFFIGFLAMAIPVFVSIQVAYRSRPVYAKLNSQLDRYQQVIEPLRRLAMFAIPAVFGLFAGVSASSGWQRTLLWLNRTPSGTTDPQFGLDTSFYLFELPFYHAVVGFASAVVIISMLGVLATSYLYGAVRFTGREVRISKSSRIQIAITAGVYFLLQGVSIWLDQYSSVVNTANGGLFTGAAFSDVNAVIPGRTILAGIAVVVAVMFIITAAIGRWRLPIIGTAGLIVASILIGTAYPAIVQRFQVEPNERSLESPFYERNIEATRAAYGLADIEEIPYDATTDTTPGALREDAATTANIRILDPAVVGDAFSQLQQFRQYYQFGDNLDVDRYQIDGRVQDTVVAVRELSPTNTGTSWVNQHLVYTHGYSLVAAYGTQRTSDGQPVFLESGIPASGDLGDFEPRVYFGEDSPDYSIVGGPESGDKVELDYPSGVDGADETYTTFQGDGGPKVDNVFKRLIYALKFQSEQIFLANQINDQSQILYDRDPAERVGKVAPYLTVDKDPYPSVVDGRVVWIVDGYTTSDQYPYSQQTQPLVPTDRINYIRNSVKATVDAYDGKVTLYAWDTDDPILKTWQKVFPSTLKPIADISGELMSHLRFPADMFKVQRAVLGKYHVTDPGSIYSNQDLWTTPNDPTATTEAGTPASLQPPYYLTMQMPGQDSPRFSLYSTFIPPATQDTSRSVLTGYLGVDSDAGSTAGEKAADYGKLRLLTLPNDDTIPAPTQIQNNFNSDTNVANQLNLLERGGRTSVVRGNLLTLPVGGGLLYVQPVYVRSTGDTSYPLLRKVLVAFGDKIAFEDTLDAALDSIFEGDSGATAGDEDVVPTTPADGAAGDGSTDGATDGGTGSTPTPAPTASPAAPAQDVQAALDAANTALQERQAAYASGDLVAAAQADQRFTEAVQRAYELSQQQ.

A run of 7 helical transmembrane segments spans residues 16-36 (LAITAAIIAALVIAFFIFAGF), 56-76 (WGAGIALFFIGFLAMAIPVFV), 108-128 (LAMFAIPAVFGLFAGVSASSG), 161-181 (FYHAVVGFASAVVIISMLGVL), 205-225 (IQIAITAGVYFLLQGVSIWLD), 255-275 (TILAGIAVVVAVMFIITAAIG), and 281-301 (IIGTAGLIVASILIGTAYPAI). Over residues 687–702 (QDLWTTPNDPTATTEA) the composition is skewed to polar residues. Disordered stretches follow at residues 687-706 (QDLWTTPNDPTATTEAGTPA) and 874-924 (GATA…AQDV). Composition is skewed to low complexity over residues 884 to 900 (PTTPADGAAGDGSTDGA) and 907 to 921 (STPTPAPTASPAAPA).

The protein belongs to the UPF0182 family.

The protein localises to the cell membrane. This chain is UPF0182 protein CMS1887, found in Clavibacter sepedonicus (Clavibacter michiganensis subsp. sepedonicus).